Reading from the N-terminus, the 317-residue chain is MQNETRSLWPHKDLLDVDQLSKDELLHLLDTAAQFHEINRRPVKKVPTLKGKSVILFFAEPSTRTKTSFDVAGKRLSADTFSLAKSGSSLQKGESLKDTALTLEAMNPDVLVIRHSSSGAARFLADRLACGVVNAGDGWHAHPTQALLDCYSLRQVWGDTFEGRTLCILGDIAHSRVARSNVKLLTSLGVRVRLCAPRTLLPAGVGNWPVEVFTDLDAAVRDADAVMCLRLQLERQQAGLLPDLREYSNRYCLTPRRLELAKPEARVLHPGPMNRGLEIASSIADAPASLVLDQVAAGVATRMAILFLLATRTDGGR.

Arginine 64 and threonine 65 together coordinate carbamoyl phosphate. Position 92 (lysine 92) interacts with L-aspartate. The carbamoyl phosphate site is built by arginine 114, histidine 142, and glutamine 145. 2 residues coordinate L-aspartate: arginine 176 and arginine 230. Carbamoyl phosphate-binding residues include glycine 271 and proline 272.

The protein belongs to the aspartate/ornithine carbamoyltransferase superfamily. ATCase family. In terms of assembly, heterododecamer (2C3:3R2) of six catalytic PyrB chains organized as two trimers (C3), and six regulatory PyrI chains organized as three dimers (R2).

The enzyme catalyses carbamoyl phosphate + L-aspartate = N-carbamoyl-L-aspartate + phosphate + H(+). It participates in pyrimidine metabolism; UMP biosynthesis via de novo pathway; (S)-dihydroorotate from bicarbonate: step 2/3. Catalyzes the condensation of carbamoyl phosphate and aspartate to form carbamoyl aspartate and inorganic phosphate, the committed step in the de novo pyrimidine nucleotide biosynthesis pathway. This Nitratidesulfovibrio vulgaris (strain DP4) (Desulfovibrio vulgaris) protein is Aspartate carbamoyltransferase catalytic subunit.